We begin with the raw amino-acid sequence, 262 residues long: Putative glutamine--fructose-6-phosphate aminotransferase [isomerizing] (262 aa).

Cys-2 (nucleophile; for GATase activity) is an active-site residue. In terms of domain architecture, Glutamine amidotransferase type-2 spans 2–262 (CGIFGYCNFL…RKSPPFVHNT (261 aa)).

It carries out the reaction D-fructose 6-phosphate + L-glutamine = D-glucosamine 6-phosphate + L-glutamate. Its pathway is nucleotide-sugar biosynthesis; UDP-N-acetyl-alpha-D-glucosamine biosynthesis; alpha-D-glucosamine 6-phosphate from D-fructose 6-phosphate: step 1/1. In terms of biological role, involved in amino sugar synthesis (formation of chitin, supplies the amino sugars of asparagine-linked oligosaccharides of glycoproteins). The chain is Putative glutamine--fructose-6-phosphate aminotransferase [isomerizing] from Saccharomyces cerevisiae (strain ATCC 204508 / S288c) (Baker's yeast).